A 602-amino-acid polypeptide reads, in one-letter code: Chaperone protein dnaK (602 aa).

The protein belongs to the heat shock protein 70 family.

The protein localises to the plastid. The protein resides in the chloroplast. Functionally, acts as a chaperone. The sequence is that of Chaperone protein dnaK from Thalassiosira pseudonana (Marine diatom).